A 199-amino-acid polypeptide reads, in one-letter code: Recombination protein RecR (199 aa).

The C4-type zinc finger occupies 56-71; it reads CRSCFNVAQSELCRIC. The Toprim domain maps to 79 to 174; the sequence is ALICVVEEPK…RVTRLASGLP (96 aa).

The protein belongs to the RecR family.

Its function is as follows. May play a role in DNA repair. It seems to be involved in an RecBC-independent recombinational process of DNA repair. It may act with RecF and RecO. This chain is Recombination protein RecR, found in Frankia alni (strain DSM 45986 / CECT 9034 / ACN14a).